Here is a 429-residue protein sequence, read N- to C-terminus: Enolase (429 aa).

Residue Gln167 participates in (2R)-2-phosphoglycerate binding. The active-site Proton donor is Glu209. 3 residues coordinate Mg(2+): Asp246, Glu289, and Asp316. 4 residues coordinate (2R)-2-phosphoglycerate: Lys341, Arg370, Ser371, and Lys392. The active-site Proton acceptor is Lys341.

Belongs to the enolase family. Component of the RNA degradosome, a multiprotein complex involved in RNA processing and mRNA degradation. Mg(2+) is required as a cofactor.

It localises to the cytoplasm. The protein localises to the secreted. Its subcellular location is the cell surface. It catalyses the reaction (2R)-2-phosphoglycerate = phosphoenolpyruvate + H2O. It functions in the pathway carbohydrate degradation; glycolysis; pyruvate from D-glyceraldehyde 3-phosphate: step 4/5. Catalyzes the reversible conversion of 2-phosphoglycerate (2-PG) into phosphoenolpyruvate (PEP). It is essential for the degradation of carbohydrates via glycolysis. This chain is Enolase, found in Pseudomonas aeruginosa (strain LESB58).